A 557-amino-acid chain; its full sequence is Fatty acyl-CoA hydrolase precursor, medium chain (557 aa).

Positions 1-25 (MATEKNTLLSLILTAGITALVATGQ) are cleaved as a signal peptide. A disulfide bridge connects residues Cys93 and Cys122. Ser227 (acyl-ester intermediate) is an active-site residue. Active-site charge relay system residues include Glu345 and His460. Asn476 carries N-linked (GlcNAc...) asparagine glycosylation.

It belongs to the type-B carboxylesterase/lipase family. In terms of tissue distribution, highest levels in uropygial gland, much lower in liver and kidney.

In terms of biological role, fatty acid biosynthesis chain termination and release of the free fatty acid product is achieved by hydrolysis of the thio ester by a thioesterase. This thioesterase may be associated with peroxisome proliferation and may play a role in the production of 3-hydroxy fatty acid diester pheromones. The protein is Fatty acyl-CoA hydrolase precursor, medium chain of Anas platyrhynchos (Mallard).